We begin with the raw amino-acid sequence, 505 residues long: ATP synthase subunit alpha, chloroplastic (505 aa).

Gly170–Thr177 lines the ATP pocket.

The protein belongs to the ATPase alpha/beta chains family. F-type ATPases have 2 components, CF(1) - the catalytic core - and CF(0) - the membrane proton channel. CF(1) has five subunits: alpha(3), beta(3), gamma(1), delta(1), epsilon(1). CF(0) has four main subunits: a, b, b' and c.

Its subcellular location is the plastid. The protein localises to the chloroplast thylakoid membrane. The enzyme catalyses ATP + H2O + 4 H(+)(in) = ADP + phosphate + 5 H(+)(out). Its function is as follows. Produces ATP from ADP in the presence of a proton gradient across the membrane. The alpha chain is a regulatory subunit. The chain is ATP synthase subunit alpha, chloroplastic from Zygnema circumcarinatum (Green alga).